A 79-amino-acid polypeptide reads, in one-letter code: Small ribosomal subunit protein bS18 (79 aa).

Belongs to the bacterial ribosomal protein bS18 family. As to quaternary structure, part of the 30S ribosomal subunit. Forms a tight heterodimer with protein bS6.

Functionally, binds as a heterodimer with protein bS6 to the central domain of the 16S rRNA, where it helps stabilize the platform of the 30S subunit. This chain is Small ribosomal subunit protein bS18, found in Streptococcus pyogenes serotype M49 (strain NZ131).